The chain runs to 437 residues: Trigger factor (437 aa).

Positions 163 to 248 (DDRVTVDFEG…VKKIEASHLP (86 aa)) constitute a PPIase FKBP-type domain.

Belongs to the FKBP-type PPIase family. Tig subfamily.

The protein localises to the cytoplasm. The catalysed reaction is [protein]-peptidylproline (omega=180) = [protein]-peptidylproline (omega=0). In terms of biological role, involved in protein export. Acts as a chaperone by maintaining the newly synthesized protein in an open conformation. Functions as a peptidyl-prolyl cis-trans isomerase. The chain is Trigger factor from Variovorax paradoxus (strain S110).